The sequence spans 273 residues: Co-chaperone protein DjlA (273 aa).

Topologically, residues 1–6 (MHYWGK) are periplasmic. The helical transmembrane segment at 7 to 31 (LLGLIFGVVSGAGFWGIVIGLFIGH) threads the bilayer. Over 32–273 (MLDRASVRGN…DLIKKEKGFK (242 aa)) the chain is Cytoplasmic. Residues 207–273 (DACKVLGVRE…DLIKKEKGFK (67 aa)) enclose the J domain.

As to quaternary structure, homodimer.

It localises to the cell inner membrane. Regulatory DnaK co-chaperone. Direct interaction between DnaK and DjlA is needed for the induction of the wcaABCDE operon, involved in the synthesis of a colanic acid polysaccharide capsule, possibly through activation of the RcsB/RcsC phosphotransfer signaling pathway. The colanic acid capsule may help the bacterium survive conditions outside the host. The polypeptide is Co-chaperone protein DjlA (Photorhabdus laumondii subsp. laumondii (strain DSM 15139 / CIP 105565 / TT01) (Photorhabdus luminescens subsp. laumondii)).